The sequence spans 189 residues: dTTP/UTP pyrophosphatase (189 aa).

Catalysis depends on D71, which acts as the Proton acceptor.

Belongs to the Maf family. YhdE subfamily. The cofactor is a divalent metal cation.

The protein resides in the cytoplasm. It carries out the reaction dTTP + H2O = dTMP + diphosphate + H(+). The enzyme catalyses UTP + H2O = UMP + diphosphate + H(+). Functionally, nucleoside triphosphate pyrophosphatase that hydrolyzes dTTP and UTP. May have a dual role in cell division arrest and in preventing the incorporation of modified nucleotides into cellular nucleic acids. The sequence is that of dTTP/UTP pyrophosphatase from Pseudoalteromonas translucida (strain TAC 125).